We begin with the raw amino-acid sequence, 122 residues long: Large ribosomal subunit protein uL14 (122 aa).

It belongs to the universal ribosomal protein uL14 family. As to quaternary structure, part of the 50S ribosomal subunit. Forms a cluster with proteins L3 and L19. In the 70S ribosome, L14 and L19 interact and together make contacts with the 16S rRNA in bridges B5 and B8.

Functionally, binds to 23S rRNA. Forms part of two intersubunit bridges in the 70S ribosome. The sequence is that of Large ribosomal subunit protein uL14 from Chlorobium phaeobacteroides (strain DSM 266 / SMG 266 / 2430).